Here is a 98-residue protein sequence, read N- to C-terminus: Small ribosomal subunit protein bS18c (98 aa).

The span at methionine 1–proline 13 shows a compositional bias: basic and acidic residues. Positions methionine 1–lysine 26 are disordered.

This sequence belongs to the bacterial ribosomal protein bS18 family. In terms of assembly, part of the 30S ribosomal subunit.

It is found in the plastid. Its subcellular location is the chloroplast. This chain is Small ribosomal subunit protein bS18c, found in Gnetum parvifolium (Small-leaved jointfir).